The sequence spans 31 residues: Photosystem II reaction center protein T (31 aa).

A helical membrane pass occupies residues Ser3–Phe23.

Belongs to the PsbT family. As to quaternary structure, PSII is composed of 1 copy each of membrane proteins PsbA, PsbB, PsbC, PsbD, PsbE, PsbF, PsbH, PsbI, PsbJ, PsbK, PsbL, PsbM, PsbT, PsbX, PsbY, PsbZ, Psb30/Ycf12, peripheral proteins PsbO, CyanoQ (PsbQ), PsbU, PsbV and a large number of cofactors. It forms dimeric complexes.

It is found in the cellular thylakoid membrane. Its function is as follows. Found at the monomer-monomer interface of the photosystem II (PS II) dimer, plays a role in assembly and dimerization of PSII. PSII is a light-driven water plastoquinone oxidoreductase, using light energy to abstract electrons from H(2)O, generating a proton gradient subsequently used for ATP formation. This is Photosystem II reaction center protein T from Trichodesmium erythraeum (strain IMS101).